Reading from the N-terminus, the 296-residue chain is 110 kDa antigen (296 aa).

A 1; approximate repeat occupies E132 to I143. The interval E132–P296 is 13.5 X 12 AA approximate tandem repeats of E-E-T-Q-K-T-V-E-P-E-Q-T. The segment at E133 to P296 is disordered. A 2; approximate repeat occupies E144 to T155. Repeat unit 3 spans residues E156–T167. Residues E168–I179 form a 4; approximate repeat. Copy 5 of the repeat occupies E180 to T191. The span at E181 to E271 shows a compositional bias: basic and acidic residues. A 6; approximate repeat occupies E192–T203. Tandem repeats lie at residues E204–T215, E216–T227, E228–T239, E240–T251, E252–T263, and E264–T275. The stretch at E276–T287 is one 13; approximate repeat. Residues E277–P296 show a composition bias toward polar residues. One copy of the 14; truncated repeat lies at Q288 to T293.

The sequence is that of 110 kDa antigen from Plasmodium knowlesi.